A 402-amino-acid chain; its full sequence is Nicotinate phosphoribosyltransferase (402 aa).

His-226 is subject to Phosphohistidine; by autocatalysis.

Belongs to the NAPRTase family. Transiently phosphorylated on a His residue during the reaction cycle. Phosphorylation strongly increases the affinity for substrates and increases the rate of nicotinate D-ribonucleotide production. Dephosphorylation regenerates the low-affinity form of the enzyme, leading to product release.

The enzyme catalyses nicotinate + 5-phospho-alpha-D-ribose 1-diphosphate + ATP + H2O = nicotinate beta-D-ribonucleotide + ADP + phosphate + diphosphate. It functions in the pathway cofactor biosynthesis; NAD(+) biosynthesis; nicotinate D-ribonucleotide from nicotinate: step 1/1. Catalyzes the synthesis of beta-nicotinate D-ribonucleotide from nicotinate and 5-phospho-D-ribose 1-phosphate at the expense of ATP. This chain is Nicotinate phosphoribosyltransferase, found in Chromobacterium violaceum (strain ATCC 12472 / DSM 30191 / JCM 1249 / CCUG 213 / NBRC 12614 / NCIMB 9131 / NCTC 9757 / MK).